Reading from the N-terminus, the 286-residue chain is Formamidopyrimidine-DNA glycosylase (286 aa).

The active-site Schiff-base intermediate with DNA is the proline 2. Glutamate 3 (proton donor) is an active-site residue. The active-site Proton donor; for beta-elimination activity is the lysine 61. DNA-binding residues include histidine 103, arginine 122, and arginine 164. An FPG-type zinc finger spans residues 250-284 (NAYAQTGEPCGRCGTLIIRESFMNRGSHYCPNCQK). Arginine 274 functions as the Proton donor; for delta-elimination activity in the catalytic mechanism.

This sequence belongs to the FPG family. Monomer. The cofactor is Zn(2+).

The enzyme catalyses Hydrolysis of DNA containing ring-opened 7-methylguanine residues, releasing 2,6-diamino-4-hydroxy-5-(N-methyl)formamidopyrimidine.. The catalysed reaction is 2'-deoxyribonucleotide-(2'-deoxyribose 5'-phosphate)-2'-deoxyribonucleotide-DNA = a 3'-end 2'-deoxyribonucleotide-(2,3-dehydro-2,3-deoxyribose 5'-phosphate)-DNA + a 5'-end 5'-phospho-2'-deoxyribonucleoside-DNA + H(+). Its function is as follows. Involved in base excision repair of DNA damaged by oxidation or by mutagenic agents. Acts as a DNA glycosylase that recognizes and removes damaged bases. Has a preference for oxidized purines, such as 7,8-dihydro-8-oxoguanine (8-oxoG). Has AP (apurinic/apyrimidinic) lyase activity and introduces nicks in the DNA strand. Cleaves the DNA backbone by beta-delta elimination to generate a single-strand break at the site of the removed base with both 3'- and 5'-phosphates. This chain is Formamidopyrimidine-DNA glycosylase, found in Corynebacterium glutamicum (strain ATCC 13032 / DSM 20300 / JCM 1318 / BCRC 11384 / CCUG 27702 / LMG 3730 / NBRC 12168 / NCIMB 10025 / NRRL B-2784 / 534).